Consider the following 558-residue polypeptide: Glutamine-dependent NAD(+) synthetase (558 aa).

A CN hydrolase domain is found at 2–262; that stretch reads FTIALAQLNP…LALLSYDLSS (261 aa). Glu42 serves as the catalytic Proton acceptor; for glutaminase activity. Lys117 functions as the For glutaminase activity in the catalytic mechanism. Tyr123 serves as a coordination point for L-glutamine. Catalysis depends on Cys153, which acts as the Nucleophile; for glutaminase activity. Ser190 and Lys196 together coordinate L-glutamine. A ligase region spans residues 284–558; the sequence is ALVLGVGDYL…IAQAFHPQGS (275 aa). 304 to 311 is a binding site for ATP; the sequence is GLSGGIDS. Asn387 lines the deamido-NAD(+) pocket. Thr411 is a binding site for ATP. The deamido-NAD(+) site is built by Glu416 and Lys526.

It in the C-terminal section; belongs to the NAD synthetase family.

The enzyme catalyses deamido-NAD(+) + L-glutamine + ATP + H2O = L-glutamate + AMP + diphosphate + NAD(+) + H(+). Its pathway is cofactor biosynthesis; NAD(+) biosynthesis; NAD(+) from deamido-NAD(+) (L-Gln route): step 1/1. Catalyzes the ATP-dependent amidation of deamido-NAD to form NAD. Uses L-glutamine as a nitrogen source. This is Glutamine-dependent NAD(+) synthetase from Synechocystis sp. (strain ATCC 27184 / PCC 6803 / Kazusa).